Reading from the N-terminus, the 761-residue chain is Xaa-Pro dipeptidyl-peptidase (761 aa).

Catalysis depends on charge relay system residues Ser347, Asp467, and His497.

The protein belongs to the peptidase S15 family. In terms of assembly, homodimer.

It localises to the cytoplasm. It catalyses the reaction Hydrolyzes Xaa-Pro-|- bonds to release unblocked, N-terminal dipeptides from substrates including Ala-Pro-|-p-nitroanilide and (sequentially) Tyr-Pro-|-Phe-Pro-|-Gly-Pro-|-Ile.. Removes N-terminal dipeptides sequentially from polypeptides having unsubstituted N-termini provided that the penultimate residue is proline. This chain is Xaa-Pro dipeptidyl-peptidase, found in Streptococcus agalactiae serotype III (strain NEM316).